Here is a 2134-residue protein sequence, read N- to C-terminus: Tudor domain-containing protein 6 (2134 aa).

The tract at residues 287-315 is disordered; the sequence is RAPVGTDDEDSGSATWEEREESPDKPGSP. Threonine 292 is subject to Phosphothreonine. 4 Tudor domains span residues 309 to 368, 542 to 599, 820 to 879, and 1038 to 1092; these read PDKP…YFRM, RPEP…FRQL, YEGD…FFQV, and TLAP…AHDV. The tract at residues 1271-1296 is disordered; that stretch reads SPMSGTKLDSALPERRMGEPSGRDLP. Residues 1282-1296 show a composition bias toward basic and acidic residues; sequence LPERRMGEPSGRDLP. Tudor domains are found at residues 1358–1417 and 1570–1630; these read QWQS…DAVL and CPQI…LLLV. Disordered stretches follow at residues 1699 to 1733 and 1860 to 1885; these read KKYAKTGVPKNDLSSEKRGPERKGSLASPDLGLKK and LQHSPAGEEEKEELGLGSPMAPLSPG. Basic and acidic residues predominate over residues 1711–1722; sequence LSSEKRGPERKG. Phosphoserine is present on residues serine 1723 and serine 1726. Serine 1925 carries the phosphoserine modification. Over residues 1930–1939 the composition is skewed to polar residues; sequence AVSQDIQGSR. Positions 1930 to 1985 are disordered; it reads AVSQDIQGSRCSEDERKAGYMGSSDDDHSRSPLLQHGKGGNSPAHDGRNLSEEEFP. 3 positions are modified to phosphoserine: serine 1980, serine 2063, and serine 2115.

As to quaternary structure, found in a mRNP complex (i.e. messenger ribonucleoproteins which correspond to mRNA with bound proteins), at least composed of TDRD1, TDRD6, TDRD7 and DDX4. Found in a complex, at least composed of PIWIL1, PIWIL2, DDX4 and TDRD6. Interacts with Tex19.1 and probably Tex19.2. Interacts with PRMT5. Interacts with SNRPB (when methylated); to trigger spliceosome formation. Undergoes proteolytic cleavage near the C-terminal by an unknown protease during the transition from meiosis I to meiosis II in primary spermatocytes. Testis specific. Expressed in primary spermatocytes at post natal (PN) day 17.5. Expressed in midpachytene stage of primary spermatocytes at PN16 and in round spermatids at PN22 (at protein level).

The protein resides in the cytoplasm. Tudor domain-containing protein involved in germ cell development, more specifically the formation of chromatoid body (during spermiogenesis), Balbiani body (during oogenesis), germ plasm (upon fertilization), and for proper miRNA expression and spliceosome maturation. Essential for RNA-dependent helicase UPF1 localization to chromatoid body, for UPF1-UPF2 and UPF1-DDX4 interactions which are required for mRNA degradation, using the extended 3' UTR-triggered nonsense-mediated mRNA decay (NMD) pathway. Involved in spliceosome maturation and mRNA splicing in prophase I spermatocytes through interaction with arginine N-methyltransferase PRMT5 and symmetrically arginine dimethylated SNRPB (small nuclear ribonucleoprotein-associated protein). This is Tudor domain-containing protein 6 from Mus musculus (Mouse).